A 401-amino-acid polypeptide reads, in one-letter code: Nodal homolog 3-B (401 aa).

The first 18 residues, 1–18 (MAFLSLFLCLVFSSPLMA), serve as a signal peptide directing secretion. Positions 19–274 (MPPALQGRKA…KVNGFRRLRR (256 aa)) are excised as a propeptide. Asn-168, Asn-337, and Asn-344 each carry an N-linked (GlcNAc...) asparagine glycan. Disulfide bonds link Cys-299/Cys-365 and Cys-328/Cys-396.

Belongs to the TGF-beta family. In terms of assembly, monomer. The propeptide region interacts with bmp4 in a non-covalent manner. Expressed in the dorsal marginal region of late blastula, becoming restricted to the Spemann organizer at the early gastrula stage.

Its subcellular location is the secreted. Its function is as follows. Exhibits mesoderm-dorsalizing activity and neural-inducing activity, but lacks mesoderm-inducing activity. Regulates the expression of specific mesodermal and neural genes. Induces convergent extension movements at the embryonic midline by activating the fgf signaling pathway to induce t/bra expression in the organizer region. Acts with wnt11 to induce Spemann organizer cells and induce axis formation. The unprocessed protein antagonizes bmp-signaling. The sequence is that of Nodal homolog 3-B from Xenopus tropicalis (Western clawed frog).